The sequence spans 454 residues: UDP-N-acetylmuramate--L-alanine ligase (454 aa).

An ATP-binding site is contributed by 113 to 119; that stretch reads GSHGKTT.

It belongs to the MurCDEF family.

The protein resides in the cytoplasm. The catalysed reaction is UDP-N-acetyl-alpha-D-muramate + L-alanine + ATP = UDP-N-acetyl-alpha-D-muramoyl-L-alanine + ADP + phosphate + H(+). It participates in cell wall biogenesis; peptidoglycan biosynthesis. In terms of biological role, cell wall formation. The polypeptide is UDP-N-acetylmuramate--L-alanine ligase (Sulfurihydrogenibium sp. (strain YO3AOP1)).